Consider the following 380-residue polypeptide: tRNA-specific 2-thiouridylase MnmA (380 aa).

ATP-binding positions include Ala26–Ser33 and Leu52. The active-site Nucleophile is Cys120. Cys120 and Cys217 are disulfide-bonded. Gly144 contributes to the ATP binding site. Residues Arg166–Gln168 form an interaction with tRNA region. Catalysis depends on Cys217, which acts as the Cysteine persulfide intermediate.

It belongs to the MnmA/TRMU family.

It localises to the cytoplasm. The catalysed reaction is S-sulfanyl-L-cysteinyl-[protein] + uridine(34) in tRNA + AH2 + ATP = 2-thiouridine(34) in tRNA + L-cysteinyl-[protein] + A + AMP + diphosphate + H(+). In terms of biological role, catalyzes the 2-thiolation of uridine at the wobble position (U34) of tRNA, leading to the formation of s(2)U34. The polypeptide is tRNA-specific 2-thiouridylase MnmA (Jannaschia sp. (strain CCS1)).